Consider the following 195-residue polypeptide: Calcineurin B homologous protein 1 (195 aa).

Gly-2 carries the N-myristoyl glycine lipid modification. 4 EF-hand domains span residues 26 to 61, 66 to 101, 110 to 145, and 151 to 186; these read SQIT…AINP, IINA…KSKD, SRSN…MVGV, and QLGS…VDVE. Ca(2+) is bound by residues Asp-123, Asp-125, Asp-127, Lys-129, Glu-134, Asp-164, Asp-166, Asp-168, and Glu-175.

This sequence belongs to the calcineurin regulatory subunit family. CHP subfamily. In terms of assembly, monomer. Post-translationally, phosphorylated. In terms of processing, calcium-binding or N-myristoylation are necessary for the Na(+)/H(+) exchange activities.

The protein resides in the nucleus. It is found in the cytoplasm. The protein localises to the cytoskeleton. It localises to the endomembrane system. Its subcellular location is the endoplasmic reticulum-Golgi intermediate compartment. The protein resides in the endoplasmic reticulum. It is found in the cell membrane. The protein localises to the membrane. Its function is as follows. Calcium-binding protein involved in different processes such as regulation of vesicular trafficking, plasma membrane Na(+)/H(+) exchanger and gene transcription. Involved in the constitutive exocytic membrane traffic. Mediates the association between microtubules and membrane-bound organelles of the endoplasmic reticulum and Golgi apparatus and is also required for the targeting and fusion of transcytotic vesicles (TCV) with the plasma membrane. Functions as an integral cofactor in cell pH regulation by controlling plasma membrane-type Na(+)/H(+) exchange activity. Inhibits serum- and GTPase-stimulated Na(+)/H(+) exchange. Plays a role as an inhibitor of ribosomal RNA transcription. Acts as a negative regulator of the calcineurin/NFAT signaling pathway. The polypeptide is Calcineurin B homologous protein 1 (CHP1) (Gallus gallus (Chicken)).